The following is a 318-amino-acid chain: MGIAECRDKVLGGGELTKDEARGLMEADVTELAAAADEITRRFNGDGVDVEQLNNIKRDGCSEDCTFCGQSAFYDADKEPHPLPEPEEVVRAALKAKKEEASSYCLVAAWREPTPEGFEKVCTIIQEINTHVGISVECSLGFLTRERAARLKGLGVKRYNHNLETARSKFPEICSTHTYEDRLDTLEIAREAGLELCTGGIIGMGESRGQRIELAMELARIRPEEATVNILVPVQGTPMELQAPLPPGEAERFFALVRFLLPRSVVKISGGREKALDDDGRAILRGGANGIITSGYLTMGGNDSSADMEMIREAGLEA.

Residues D46–R272 form the Radical SAM core domain. [4Fe-4S] cluster-binding residues include C61, C65, and C68. Positions 105, 138, 197, and 267 each coordinate [2Fe-2S] cluster.

This sequence belongs to the radical SAM superfamily. Biotin synthase family. In terms of assembly, homodimer. The cofactor is [4Fe-4S] cluster. It depends on [2Fe-2S] cluster as a cofactor.

It catalyses the reaction (4R,5S)-dethiobiotin + (sulfur carrier)-SH + 2 reduced [2Fe-2S]-[ferredoxin] + 2 S-adenosyl-L-methionine = (sulfur carrier)-H + biotin + 2 5'-deoxyadenosine + 2 L-methionine + 2 oxidized [2Fe-2S]-[ferredoxin]. It participates in cofactor biosynthesis; biotin biosynthesis; biotin from 7,8-diaminononanoate: step 2/2. In terms of biological role, catalyzes the conversion of dethiobiotin (DTB) to biotin by the insertion of a sulfur atom into dethiobiotin via a radical-based mechanism. This Cenarchaeum symbiosum (strain A) protein is Biotin synthase.